The primary structure comprises 216 residues: Flagellar transcriptional regulator FlhC (216 aa).

4 residues coordinate Zn(2+): Cys-137, Cys-140, Cys-157, and Cys-160.

It belongs to the FlhC family. In terms of assembly, heterohexamer composed of two FlhC and four FlhD subunits. Each FlhC binds a FlhD dimer, forming a heterotrimer, and a hexamer assembles by dimerization of two heterotrimers. It depends on Zn(2+) as a cofactor.

The protein localises to the cytoplasm. In terms of biological role, functions in complex with FlhD as a master transcriptional regulator that regulates transcription of several flagellar and non-flagellar operons by binding to their promoter region. Activates expression of class 2 flagellar genes, including fliA, which is a flagellum-specific sigma factor that turns on the class 3 genes. Also regulates genes whose products function in a variety of physiological pathways. The sequence is that of Flagellar transcriptional regulator FlhC from Paraburkholderia atlantica.